The primary structure comprises 1187 residues: Myelin transcription factor 1-like protein (1187 aa).

The interval 1–20 (MDVDAEEKRHRTRSKGVRVP) is disordered. Residues 22 to 65 (EPAIQELFSCPTPGCDGSGHVSGKYARHRSVYGCPLAKKRKTQD) form a CCHHC-type 1 zinc finger. The Zn(2+) site is built by Cys-31, Cys-36, His-49, and Cys-55. Disordered stretches follow at residues 56–178 (PLAK…QMSC) and 221–248 (RTES…GRKS). Residues 89–172 (ECYESDGTED…EEEEEEEENE (84 aa)) show a composition bias toward acidic residues. Ser-251 is subject to Phosphoserine. 2 disordered regions span residues 343–422 (SETN…DRSE) and 450–509 (REKM…PTPG). Residues 344–358 (ETNPQDRSQPPNMSV) show a composition bias toward polar residues. Basic and acidic residues-rich tracts occupy residues 362–377 (VRQE…DRSY), 401–412 (AKEDGCHERDDD), and 450–504 (REKM…RESK). CCHHC-type zinc fingers lie at residues 496–539 (SRTE…PPEI) and 540–583 (LAMH…KLAK). Residues Cys-505, Cys-510, His-523, Cys-529, Cys-549, Cys-554, His-567, and Cys-573 each contribute to the Zn(2+) site. Residues 684-708 (ASPSSSTTSSYAPSSSSNLSCGGGS) form a disordered region. 3 consecutive CCHHC-type zinc fingers follow at residues 895–938 (LATS…GIRI), 944–987 (DKED…QKDG), and 997–1040 (KSVK…MKKA). Cys-904, Cys-909, His-922, Cys-928, Cys-953, Cys-958, His-971, Cys-977, Cys-1006, Cys-1011, His-1024, and Cys-1030 together coordinate Zn(2+). A coiled-coil region spans residues 1055-1131 (SNGIENDEEI…LANLSQSLIH (77 aa)).

The protein belongs to the MYT1 family. Interacts with SIN3B. In terms of tissue distribution, brain, testis and pituitary gland. Expression is higher in the brain than in the testis and pituitary gland. Highest level expression seen in the developing CNS.

It is found in the nucleus. The protein localises to the chromosome. Transcription factor that plays a key role in neuronal differentiation. Acts by specifically repressing expression of non-neuronal genes during neuron differentiation. In contrast to other transcription repressors that inhibit specific lineages, mediates repression of multiple differentiation programs. Also represses expression of negative regulators of neurogenesis, such as members of the Notch signaling pathway, including HES1. The combination of three transcription factors, ASCL1, POU3F2/BRN2 and MYT1L, is sufficient to reprogram fibroblasts and other somatic cells into induced neuronal (iN) cells in vitro. Directly binds the 5'-AAGTT-3' core motif present on the promoter of target genes and represses transcription by recruiting a multiprotein complex containing SIN3B. The 5'-AAGTT-3' core motif is absent from the promoter of neural genes. This chain is Myelin transcription factor 1-like protein (Myt1l), found in Rattus norvegicus (Rat).